The sequence spans 471 residues: Protein translocase subunit SecF (471 aa).

The tract at residues 1–29 (MVSRAKVGAETTKGIDEPDRNDNTDDNGA) is disordered. The span at 13-23 (KGIDEPDRNDN) shows a compositional bias: basic and acidic residues. 6 helical membrane passes run 88–108 (GGVIVAVAVLSIIVRGFTFGI), 211–231 (ITKKVVIALVVFLVLVGLYIT), 242–262 (ALTTMCFDLTVTAGVYSLVGF), 267–287 (ATVIGLLTILGFSLYDTVIVF), 325–345 (LISVLPVLALMVVAVWLLGVG), and 355–375 (LVGIIVGTYSSIFFATPLLVT). Residues 393–471 (RRTLGSQVGK…TGKRNNVGRR (79 aa)) are disordered. Over residues 415–431 (KPQNQAESCADASSQEG) the composition is skewed to polar residues. A compositionally biased stretch (low complexity) spans 448 to 460 (PGVRPVRPTGTRR). The span at 461 to 471 (PTGKRNNVGRR) shows a compositional bias: basic residues.

This sequence belongs to the SecD/SecF family. SecF subfamily. In terms of assembly, forms a complex with SecD. Part of the essential Sec protein translocation apparatus which comprises SecA, SecYEG and auxiliary proteins SecDF. Other proteins may also be involved.

The protein localises to the cell membrane. Part of the Sec protein translocase complex. Interacts with the SecYEG preprotein conducting channel. SecDF uses the proton motive force (PMF) to complete protein translocation after the ATP-dependent function of SecA. The chain is Protein translocase subunit SecF from Mycobacterium leprae (strain TN).